Here is a 785-residue protein sequence, read N- to C-terminus: Formin-like protein 3 (785 aa).

The first 20 residues, 1-20 (MGRLRLAFLAISLVVFVCVS), serve as a signal peptide directing secretion. Positions 96–145 (YDWLAPASSPNEPPAETPDESSPSPSEETPSVVAPSQSVPGPPRPPPQRE) are disordered. Residues 115–134 (ESSPSPSEETPSVVAPSQSV) are compositionally biased toward low complexity. The chain crosses the membrane as a helical span at residues 154–174 (LIIAVASTAVLTFVFVALMFL). Disordered stretches follow at residues 184 to 228 (AVGS…KKRS), 241 to 329 (EFST…APKT), and 730 to 785 (ETTK…SSPS). The span at 201–223 (STGSTENSPTVASTSRKMFSVAS) shows a compositional bias: polar residues. Over residues 256 to 303 (LKLPPGRSAPPPPPAAAPPPQPPPPPPPKPQPPPPPKIARPPPAPPKG) the composition is skewed to pro residues. The FH2 domain maps to 321–747 (DSETGAPKTK…SGKKESEMTT (427 aa)). Over residues 745-754 (MTTSDSNQPS) the composition is skewed to polar residues. A compositionally biased stretch (acidic residues) spans 773–785 (SDDSDDEEDSSPS).

The protein belongs to the formin-like family. Class-I subfamily.

The protein localises to the membrane. In terms of biological role, acts as actin nucleation factor that directs the formation of actin cables and polarized growth in pollen tubes. The protein is Formin-like protein 3 (FH3) of Arabidopsis thaliana (Mouse-ear cress).